The following is a 291-amino-acid chain: Formamidopyrimidine-DNA glycosylase (291 aa).

P2 serves as the catalytic Schiff-base intermediate with DNA. E3 (proton donor) is an active-site residue. K58 acts as the Proton donor; for beta-elimination activity in catalysis. Residues H100, R123, and K166 each contribute to the DNA site. An FPG-type zinc finger spans residues 257 to 291; sequence SVYGREGKECSRCGMHIVRIVQSGRSSFYCPQCQK. The Proton donor; for delta-elimination activity role is filled by R281.

Belongs to the FPG family. In terms of assembly, monomer. It depends on Zn(2+) as a cofactor.

It catalyses the reaction Hydrolysis of DNA containing ring-opened 7-methylguanine residues, releasing 2,6-diamino-4-hydroxy-5-(N-methyl)formamidopyrimidine.. It carries out the reaction 2'-deoxyribonucleotide-(2'-deoxyribose 5'-phosphate)-2'-deoxyribonucleotide-DNA = a 3'-end 2'-deoxyribonucleotide-(2,3-dehydro-2,3-deoxyribose 5'-phosphate)-DNA + a 5'-end 5'-phospho-2'-deoxyribonucleoside-DNA + H(+). Functionally, involved in base excision repair of DNA damaged by oxidation or by mutagenic agents. Acts as a DNA glycosylase that recognizes and removes damaged bases. Has a preference for oxidized purines, such as 7,8-dihydro-8-oxoguanine (8-oxoG). Has AP (apurinic/apyrimidinic) lyase activity and introduces nicks in the DNA strand. Cleaves the DNA backbone by beta-delta elimination to generate a single-strand break at the site of the removed base with both 3'- and 5'-phosphates. This chain is Formamidopyrimidine-DNA glycosylase, found in Bartonella bacilliformis (strain ATCC 35685 / KC583 / Herrer 020/F12,63).